Reading from the N-terminus, the 124-residue chain is Small ribosomal subunit protein bS6 (124 aa).

Residues 96-124 (ETGPSPMMKEVQREEAKKAAAAQPTEAQA) are disordered. Residues 114–124 (AAAAQPTEAQA) show a composition bias toward low complexity.

This sequence belongs to the bacterial ribosomal protein bS6 family.

Its function is as follows. Binds together with bS18 to 16S ribosomal RNA. The chain is Small ribosomal subunit protein bS6 from Burkholderia mallei (strain ATCC 23344).